The following is a 312-amino-acid chain: DNA primase small subunit PriS (312 aa).

Catalysis depends on residues aspartate 88, aspartate 90, and aspartate 215.

This sequence belongs to the eukaryotic-type primase small subunit family. As to quaternary structure, heterodimer of a small subunit (PriS) and a large subunit (PriL). Mg(2+) is required as a cofactor. The cofactor is Mn(2+).

Its function is as follows. Catalytic subunit of DNA primase, an RNA polymerase that catalyzes the synthesis of short RNA molecules used as primers for DNA polymerase during DNA replication. The small subunit contains the primase catalytic core and has DNA synthesis activity on its own. Binding to the large subunit stabilizes and modulates the activity, increasing the rate of DNA synthesis while decreasing the length of the DNA fragments, and conferring RNA synthesis capability. The DNA polymerase activity may enable DNA primase to also catalyze primer extension after primer synthesis. May also play a role in DNA repair. The protein is DNA primase small subunit PriS of Pyrobaculum aerophilum (strain ATCC 51768 / DSM 7523 / JCM 9630 / CIP 104966 / NBRC 100827 / IM2).